The following is a 505-amino-acid chain: Deoxyguanosinetriphosphate triphosphohydrolase (505 aa).

The HD domain occupies 66-273 (RLTHSMEVQQ…MEAADDISYC (208 aa)).

Belongs to the dGTPase family. Type 1 subfamily. As to quaternary structure, homotetramer. Mg(2+) is required as a cofactor.

It catalyses the reaction dGTP + H2O = 2'-deoxyguanosine + triphosphate + H(+). DGTPase preferentially hydrolyzes dGTP over the other canonical NTPs. This chain is Deoxyguanosinetriphosphate triphosphohydrolase, found in Escherichia coli O81 (strain ED1a).